A 188-amino-acid chain; its full sequence is Heparin-binding hemagglutinin homolog (188 aa).

The disordered stretch occupies residues K162–K188. Positions A170–K188 are enriched in basic residues.

This sequence to M.tuberculosis HbhA.

Functionally, might mediate adherence to host cells by binding sulfated glycoconjugates. The polypeptide is Heparin-binding hemagglutinin homolog (hbhA) (Mycobacterium leprae (strain TN)).